The sequence spans 192 residues: UPF0301 protein Jann_3896 (192 aa).

It belongs to the UPF0301 (AlgH) family.

In Jannaschia sp. (strain CCS1), this protein is UPF0301 protein Jann_3896.